We begin with the raw amino-acid sequence, 592 residues long: Inactive heparanase-2 (592 aa).

A signal peptide spans 1–38 (MRVLCAFPEAMASSSSRPPSCLALVALFLALLLHLSLS). N-linked (GlcNAc...) asparagine glycans are attached at residues N254 and N392.

It belongs to the glycosyl hydrolase 79 family. In terms of assembly, interacts with HPSE. Interacts with SDC1 (via glycan chains).

Its subcellular location is the secreted. It localises to the extracellular space. The protein localises to the extracellular matrix. Functionally, binds heparin and heparan sulfate with high affinity, but lacks heparanase activity. Inhibits HPSE, possibly by competing for its substrates (in vitro). This chain is Inactive heparanase-2 (Hpse2), found in Mus musculus (Mouse).